Reading from the N-terminus, the 198-residue chain is Carnitine operon protein CaiE (198 aa).

The tract at residues 179-198 (VEENRPRLKGTTDVKPKSAQ) is disordered. Over residues 180–198 (EENRPRLKGTTDVKPKSAQ) the composition is skewed to basic and acidic residues.

Belongs to the transferase hexapeptide repeat family.

The protein operates within amine and polyamine metabolism; carnitine metabolism. Its function is as follows. Overproduction of CaiE stimulates the activity of CaiB and CaiD. The sequence is that of Carnitine operon protein CaiE from Salmonella agona (strain SL483).